The following is a 347-amino-acid chain: N6-Methyl-AMP deaminase-L (347 aa).

Zn(2+)-binding residues include H19 and H21. N(6)-methyl-AMP contacts are provided by residues H21, N23, H69, 101–104 (STPR), D142, and G175. Residue H202 coordinates Zn(2+). Residues E205, D283, and D284 each contribute to the N(6)-methyl-AMP site. E205 acts as the Proton donor in catalysis. D283 serves as a coordination point for Zn(2+).

This sequence belongs to the metallo-dependent hydrolases superfamily. Adenosine and AMP deaminases family. Monomer. It depends on Zn(2+) as a cofactor.

The catalysed reaction is N(6)-methyl-AMP + H2O + H(+) = IMP + methylamine. In terms of biological role, catalyzes the hydrolysis of the free cytosolic methylated adenosine nucleotide N(6)-methyl-AMP (N6-mAMP) to produce inositol monophosphate (IMP) and methylamine. Is required for the catabolism of cytosolic N6-mAMP, which is derived from the degradation of mRNA containing N6-methylated adenine (m6A). This Xenopus laevis (African clawed frog) protein is N6-Methyl-AMP deaminase-L (mapda.L).